The chain runs to 485 residues: DNA polymerase subunit gamma-2 (485 aa).

The disordered stretch occupies residues 28–65 (GQPELLTERSSPKGGHVKSHAELEGNGEHPEAPGSGEG). Ser38 is modified (phosphoserine). The segment covering 46-58 (SHAELEGNGEHPE) has biased composition (basic and acidic residues).

As to quaternary structure, heterotrimer composed of a catalytic subunit and a homodimer of accessory subunits (POLG:POLG2).

The protein localises to the mitochondrion. It localises to the mitochondrion matrix. The protein resides in the mitochondrion nucleoid. Its function is as follows. Accessory subunit of DNA polymerase gamma solely responsible for replication of mitochondrial DNA (mtDNA). Acts as an allosteric regulator of the holoenzyme activities. Enhances the polymerase activity and the processivity of POLG by increasing its interactions with the DNA template. Suppresses POLG exonucleolytic proofreading especially toward homopolymeric templates bearing mismatched termini. Binds to single-stranded DNA. This chain is DNA polymerase subunit gamma-2, found in Homo sapiens (Human).